Here is a 913-residue protein sequence, read N- to C-terminus: Chitin synthase 1 (913 aa).

Positions 1-135 are disordered; sequence MAYRGGGPND…QQPGAQTGGL (135 aa). N25 carries N-linked (GlcNAc...) asparagine glycosylation. Positions 41 to 56 are enriched in basic and acidic residues; the sequence is RDPHARGTSPYEHHLG. N539 carries an N-linked (GlcNAc...) asparagine glycan. 7 helical membrane-spanning segments follow: residues 566–586, 625–645, 658–678, 712–732, 740–760, 840–860, and 881–901; these read FFFHIQLIYNVLNVIFTWFSL, IINSILQYLYLAFLVIQFVLA, IASFIVFGFIQTYILVLSGYL, VILVALVTIYGLNFIASFMYL, SFPYYLVLMSTYINILMVYAF, TGLVVSWLFSNAALIVFITTD, and FLLYSTAVLALVRFTGFLWFL.

This sequence belongs to the chitin synthase family. Class III subfamily.

Its subcellular location is the cell membrane. The catalysed reaction is [(1-&gt;4)-N-acetyl-beta-D-glucosaminyl](n) + UDP-N-acetyl-alpha-D-glucosamine = [(1-&gt;4)-N-acetyl-beta-D-glucosaminyl](n+1) + UDP + H(+). Polymerizes chitin, a structural polymer of the cell wall and septum, by transferring the sugar moiety of UDP-GlcNAc to the non-reducing end of the growing chitin polymer. Plays a role in cell wall integrity and is involved in tolerance to hyperosmotic conditions. Required to successfully penetrate the host plants and thus plays a key role in pathogenicity. The chain is Chitin synthase 1 from Verticillium dahliae (strain VdLs.17 / ATCC MYA-4575 / FGSC 10137) (Verticillium wilt).